The primary structure comprises 138 residues: Basic phospholipase A2 Tpu-G6D49 (138 aa).

A signal peptide spans 1–16; that stretch reads MRTLWIMAVLLVGVEG. Cystine bridges form between C42–C131, C44–C60, C59–C111, C65–C138, C66–C104, C73–C97, and C91–C102. Positions 43, 45, and 47 each coordinate Ca(2+). The active site involves H63. D64 serves as a coordination point for Ca(2+). The active site involves D105.

Monomer. The cofactor is Ca(2+). In terms of tissue distribution, expressed by the venom gland.

The protein resides in the secreted. It carries out the reaction a 1,2-diacyl-sn-glycero-3-phosphocholine + H2O = a 1-acyl-sn-glycero-3-phosphocholine + a fatty acid + H(+). Its function is as follows. Snake venom phospholipase A2 (PLA2) that impairs hemostasis. It weakly inhibits ADP-induced platelet aggregation when tested on platelet rich plasma from human and rabbit blood (15-25% of inhibition at 5-10 ug of enzyme), and dose-dependently inhibits blood coagulation, possibly by inhibiting thrombin activation. Also induces local edema a few hours after injection in the hind foot. Exhibits high hydrolytic activities toward L-dipalmitoyl phosphatidylcholine. PLA2 catalyzes the calcium-dependent hydrolysis of the 2-acyl groups in 3-sn-phosphoglycerides. The chain is Basic phospholipase A2 Tpu-G6D49 from Craspedocephalus puniceus (Flat-nosed pitviper).